A 208-amino-acid chain; its full sequence is Probable GTP-binding protein EngB (208 aa).

Residues 23–205 (LTSEMVVLGR…RQTLLKYLLT (183 aa)) form the EngB-type G domain. GTP contacts are provided by residues 31–38 (GRSNVGKS), 57–61 (GKTRL), 84–87 (DLPG), 154–157 (TKFD), and 182–184 (FNA). Residues Ser-38 and Thr-59 each coordinate Mg(2+).

This sequence belongs to the TRAFAC class TrmE-Era-EngA-EngB-Septin-like GTPase superfamily. EngB GTPase family. Mg(2+) serves as cofactor.

In terms of biological role, necessary for normal cell division and for the maintenance of normal septation. The polypeptide is Probable GTP-binding protein EngB (Helicobacter acinonychis (strain Sheeba)).